We begin with the raw amino-acid sequence, 159 residues long: Ribosomal RNA large subunit methyltransferase H (159 aa).

Residues leucine 76, glycine 108, and 127–132 each bind S-adenosyl-L-methionine; that span reads FSKMTF.

The protein belongs to the RNA methyltransferase RlmH family. Homodimer.

The protein localises to the cytoplasm. It catalyses the reaction pseudouridine(1915) in 23S rRNA + S-adenosyl-L-methionine = N(3)-methylpseudouridine(1915) in 23S rRNA + S-adenosyl-L-homocysteine + H(+). Its function is as follows. Specifically methylates the pseudouridine at position 1915 (m3Psi1915) in 23S rRNA. This is Ribosomal RNA large subunit methyltransferase H from Geobacillus kaustophilus (strain HTA426).